A 379-amino-acid chain; its full sequence is Probable G-protein coupled receptor No18 (379 aa).

The Extracellular portion of the chain corresponds to 5–36; the sequence is EASITGRTAPELNASAAPLDDERELGETVAAT. N-linked (GlcNAc...) asparagine glycosylation occurs at Asn17. Residues 37 to 58 form a helical membrane-spanning segment; the sequence is ALLLAIILVTIVGNSLVIISVF. Topologically, residues 59–68 are cytoplasmic; it reads TYRPLRSVQN. A helical transmembrane segment spans residues 69–90; sequence FFVVSLAVADLTVALFVLPLNV. The Extracellular portion of the chain corresponds to 91–107; that stretch reads AYRLLNQWLLGSYLCQM. The cysteines at positions 105 and 184 are disulfide-linked. A helical transmembrane segment spans residues 108–128; it reads WLTCDILCCTSSILNLCVIAL. Topologically, residues 129–148 are cytoplasmic; that stretch reads DRYWAITDPINYAQKRTIRR. Residues 149 to 171 form a helical membrane-spanning segment; the sequence is VNTMIAAVWALSLVISVPPLLGW. The Extracellular portion of the chain corresponds to 172–196; sequence NDWPAQFTEDTPCTLTQERLFVVYS. A helical transmembrane segment spans residues 197-218; it reads SSGSFFIPLIIMSVVYAKIFFA. Residues 219 to 303 are Cytoplasmic-facing; it reads TKRRLRERTR…LSKERKAARV (85 aa). The segment at 234-276 is disordered; the sequence is AVPAPPQRTSSRPLAELESVASQEDETEPSPEPEPLSSRADKP. Residues 304–325 traverse the membrane as a helical segment; it reads LGVIMGVFVVCWLPFFLMYAIV. At 326–340 the chain is on the extracellular side; that stretch reads PFCTNCAPPSQRVVD. The chain crosses the membrane as a helical span at residues 341–362; that stretch reads FVTWLGYVNSSLNPIIYTIYNK. Over 363 to 375 the chain is Cytoplasmic; that stretch reads DFRTAFSRLLRCD.

It belongs to the G-protein coupled receptor 1 family.

It localises to the cell membrane. Probable G-protein coupled receptor for an amine. The chain is Probable G-protein coupled receptor No18 from Amphibalanus amphitrite (Striped barnacle).